Here is a 407-residue protein sequence, read N- to C-terminus: Indoleamine 2,3-dioxygenase 1 (407 aa).

H350 contributes to the heme b binding site. Residues 362-388 form a disordered region; that stretch reads SKQKPMGGHKSEEPSNTENRGTGGTDV.

Belongs to the indoleamine 2,3-dioxygenase family. As to quaternary structure, monomer. It depends on heme b as a cofactor.

It is found in the cytoplasm. Its subcellular location is the cytosol. The catalysed reaction is D-tryptophan + O2 = N-formyl-D-kynurenine. It carries out the reaction L-tryptophan + O2 = N-formyl-L-kynurenine. Activity is inhibited by and MTH-trp (methylthiohydantoin-DL-tryptophan), modestly inhibited by L-1MT (1-methyl-L-tryptophan) but not D-1MT (1-methyl-D-tryptophan). Catalyzes the first and rate limiting step of the catabolism of the essential amino acid tryptophan along the kynurenine pathway. Involved in the peripheral immune tolerance, contributing to maintain homeostasis by preventing autoimmunity or immunopathology that would result from uncontrolled and overreacting immune responses. Tryptophan shortage inhibits T lymphocytes division and accumulation of tryptophan catabolites induces T-cell apoptosis and differentiation of regulatory T-cells. Acts as a suppressor of anti-tumor immunity. Limits the growth of intracellular pathogens by depriving tryptophan. Protects the fetus from maternal immune rejection. The protein is Indoleamine 2,3-dioxygenase 1 of Rattus norvegicus (Rat).